Here is a 467-residue protein sequence, read N- to C-terminus: Cysteine--tRNA ligase (467 aa).

Cys-27 contributes to the Zn(2+) binding site. Residues 29–39 (ATVQGLPHIGH) carry the 'HIGH' region motif. The Zn(2+) site is built by Cys-209, His-234, and Glu-238. The 'KMSKS' region motif lies at 265–269 (KMSKS). Lys-268 serves as a coordination point for ATP.

It belongs to the class-I aminoacyl-tRNA synthetase family. In terms of assembly, monomer. The cofactor is Zn(2+).

It localises to the cytoplasm. The enzyme catalyses tRNA(Cys) + L-cysteine + ATP = L-cysteinyl-tRNA(Cys) + AMP + diphosphate. The chain is Cysteine--tRNA ligase from Mycolicibacterium gilvum (strain PYR-GCK) (Mycobacterium gilvum (strain PYR-GCK)).